The sequence spans 378 residues: Erythronate-4-phosphate dehydrogenase (378 aa).

Substrate-binding residues include Ser-45 and Thr-66. NAD(+) is bound by residues Asp-146 and Thr-175. Residue Arg-208 is part of the active site. Residue Asp-232 participates in NAD(+) binding. Glu-237 is a catalytic residue. The active-site Proton donor is the His-254. Gly-257 provides a ligand contact to NAD(+). A substrate-binding site is contributed by Tyr-258.

This sequence belongs to the D-isomer specific 2-hydroxyacid dehydrogenase family. PdxB subfamily. Homodimer.

The protein resides in the cytoplasm. The enzyme catalyses 4-phospho-D-erythronate + NAD(+) = (R)-3-hydroxy-2-oxo-4-phosphooxybutanoate + NADH + H(+). It participates in cofactor biosynthesis; pyridoxine 5'-phosphate biosynthesis; pyridoxine 5'-phosphate from D-erythrose 4-phosphate: step 2/5. Catalyzes the oxidation of erythronate-4-phosphate to 3-hydroxy-2-oxo-4-phosphonooxybutanoate. The chain is Erythronate-4-phosphate dehydrogenase from Salmonella agona (strain SL483).